Reading from the N-terminus, the 163-residue chain is Nucleotide-binding protein GWCH70_0711 (163 aa).

It belongs to the YajQ family.

In terms of biological role, nucleotide-binding protein. This chain is Nucleotide-binding protein GWCH70_0711, found in Geobacillus sp. (strain WCH70).